The primary structure comprises 51 residues: ATP synthase subunit epsilon-like protein, mitochondrial (51 aa).

At Lys21 the chain carries N6-acetyllysine.

Belongs to the eukaryotic ATPase epsilon family. F-type ATPases have 2 components, CF(1) - the catalytic core - and CF(0) - the membrane proton channel. CF(1) has five subunits: alpha(3), beta(3), gamma(1), delta(1), epsilon(1). CF(0) seems to have nine subunits: a, b, c, d, e, f, g, F6 and 8 (or A6L).

The protein localises to the mitochondrion inner membrane. Its function is as follows. Mitochondrial membrane ATP synthase (F(1)F(0) ATP synthase or Complex V) produces ATP from ADP in the presence of a proton gradient across the membrane which is generated by electron transport complexes of the respiratory chain. F-type ATPases consist of two structural domains, F(1) - containing the extramembraneous catalytic core, and F(0) - containing the membrane proton channel, linked together by a central stalk and a peripheral stalk. During catalysis, ATP synthesis in the catalytic domain of F(1) is coupled via a rotary mechanism of the central stalk subunits to proton translocation. Part of the complex F(1) domain and of the central stalk which is part of the complex rotary element. Rotation of the central stalk against the surrounding alpha(3)beta(3) subunits leads to hydrolysis of ATP in three separate catalytic sites on the beta subunits. This Homo sapiens (Human) protein is ATP synthase subunit epsilon-like protein, mitochondrial.